The primary structure comprises 209 residues: PRA1 family protein A3 (209 aa).

4 helical membrane-spanning segments follow: residues 51–72, 76–98, 143–163, and 164–184; these read LYYY…ALIT, AILG…AATF, LVFV…SCGL, and LWVL…ASLR.

This sequence belongs to the PRA1 family.

It localises to the endosome membrane. Its function is as follows. May be involved in both secretory and endocytic intracellular trafficking in the endosomal/prevacuolar compartments. The polypeptide is PRA1 family protein A3 (PRA1A3) (Arabidopsis thaliana (Mouse-ear cress)).